The primary structure comprises 413 residues: Adenylosuccinate synthetase (413 aa).

GTP-binding positions include 11–17 and 39–41; these read GDEGKGK and GHT. The Proton acceptor role is filled by D12. Mg(2+) is bound by residues D12 and G39. IMP-binding positions include 12–15, 37–40, T125, R139, Q217, T232, and R296; these read DEGK and NAGH. H40 functions as the Proton donor in the catalytic mechanism. 292-298 provides a ligand contact to substrate; that stretch reads TTTGRPR. GTP contacts are provided by residues R298, 324–326, and 402–404; these read KLD and STG.

This sequence belongs to the adenylosuccinate synthetase family. As to quaternary structure, homodimer. Requires Mg(2+) as cofactor.

The protein resides in the cytoplasm. It carries out the reaction IMP + L-aspartate + GTP = N(6)-(1,2-dicarboxyethyl)-AMP + GDP + phosphate + 2 H(+). It functions in the pathway purine metabolism; AMP biosynthesis via de novo pathway; AMP from IMP: step 1/2. Its function is as follows. Plays an important role in the de novo pathway of purine nucleotide biosynthesis. Catalyzes the first committed step in the biosynthesis of AMP from IMP. This chain is Adenylosuccinate synthetase, found in Nautilia profundicola (strain ATCC BAA-1463 / DSM 18972 / AmH).